The following is a 37-amino-acid chain: Mau operon transcriptional activator (37 aa).

Belongs to the LysR transcriptional regulatory family.

Functionally, transcriptional activator of the mau genes involved in methylamine metabolism. The sequence is that of Mau operon transcriptional activator (mauR) from Paracoccus versutus (Thiobacillus versutus).